Reading from the N-terminus, the 204-residue chain is Large ribosomal subunit protein uL4 (204 aa).

Residues 44–76 (RAGTHRTKGMGEISGTTKKPYRQKGTGSARQGS) form a disordered region.

Belongs to the universal ribosomal protein uL4 family. In terms of assembly, part of the 50S ribosomal subunit.

Its function is as follows. One of the primary rRNA binding proteins, this protein initially binds near the 5'-end of the 23S rRNA. It is important during the early stages of 50S assembly. It makes multiple contacts with different domains of the 23S rRNA in the assembled 50S subunit and ribosome. Functionally, forms part of the polypeptide exit tunnel. The chain is Large ribosomal subunit protein uL4 from Gluconobacter oxydans (strain 621H) (Gluconobacter suboxydans).